The sequence spans 808 residues: DNA gyrase subunit B (808 aa).

The region spanning 429–544 is the Toprim domain; sequence SELFIVEGDS…KGYLYIAQPP (116 aa). The Mg(2+) site is built by Glu-435, Asp-509, and Asp-511.

This sequence belongs to the type II topoisomerase GyrB family. Heterotetramer, composed of two GyrA and two GyrB chains. In the heterotetramer, GyrA contains the active site tyrosine that forms a transient covalent intermediate with DNA, while GyrB binds cofactors and catalyzes ATP hydrolysis. The cofactor is Mg(2+). Mn(2+) serves as cofactor. Requires Ca(2+) as cofactor.

Its subcellular location is the cytoplasm. The catalysed reaction is ATP-dependent breakage, passage and rejoining of double-stranded DNA.. Functionally, a type II topoisomerase that negatively supercoils closed circular double-stranded (ds) DNA in an ATP-dependent manner to modulate DNA topology and maintain chromosomes in an underwound state. Negative supercoiling favors strand separation, and DNA replication, transcription, recombination and repair, all of which involve strand separation. Also able to catalyze the interconversion of other topological isomers of dsDNA rings, including catenanes and knotted rings. Type II topoisomerases break and join 2 DNA strands simultaneously in an ATP-dependent manner. This chain is DNA gyrase subunit B, found in Rickettsia felis (strain ATCC VR-1525 / URRWXCal2) (Rickettsia azadi).